Here is a 130-residue protein sequence, read N- to C-terminus: uncharacterized protein (130 aa).

This is an uncharacterized protein from Bacillus subtilis (strain 168).